We begin with the raw amino-acid sequence, 133 residues long: Nickel-responsive regulator (133 aa).

Positions 76, 87, 89, and 95 each coordinate Ni(2+).

The protein belongs to the transcriptional regulatory CopG/NikR family. Homotetramer. It depends on Ni(2+) as a cofactor.

In terms of biological role, transcriptional repressor of the nikABCDE operon. Is active in the presence of excessive concentrations of intracellular nickel. The chain is Nickel-responsive regulator from Salmonella choleraesuis (strain SC-B67).